A 502-amino-acid chain; its full sequence is Histidine--tRNA ligase (502 aa).

Belongs to the class-II aminoacyl-tRNA synthetase family. As to quaternary structure, homodimer.

Its subcellular location is the cytoplasm. The enzyme catalyses tRNA(His) + L-histidine + ATP = L-histidyl-tRNA(His) + AMP + diphosphate + H(+). The protein is Histidine--tRNA ligase of Brucella abortus (strain S19).